We begin with the raw amino-acid sequence, 346 residues long: Uracil-DNA glycosylase (346 aa).

Residues M1–E105 are disordered. Residues A20–L29 are compositionally biased toward basic and acidic residues. Residues T30–T42 are compositionally biased toward low complexity. The span at S43–H64 shows a compositional bias: basic residues. Residues S67 to E86 show a composition bias toward acidic residues. The Proton acceptor role is filled by D186.

The protein belongs to the uracil-DNA glycosylase (UDG) superfamily. UNG family.

The protein localises to the mitochondrion. It localises to the nucleus. It carries out the reaction Hydrolyzes single-stranded DNA or mismatched double-stranded DNA and polynucleotides, releasing free uracil.. Functionally, excises uracil residues from the DNA which can arise as a result of misincorporation of dUMP residues by DNA polymerase or due to deamination of cytosine. The chain is Uracil-DNA glycosylase (uglA) from Dictyostelium discoideum (Social amoeba).